The following is a 49-amino-acid chain: Large ribosomal subunit protein bL33 (49 aa).

It belongs to the bacterial ribosomal protein bL33 family.

This Nitratidesulfovibrio vulgaris (strain ATCC 29579 / DSM 644 / CCUG 34227 / NCIMB 8303 / VKM B-1760 / Hildenborough) (Desulfovibrio vulgaris) protein is Large ribosomal subunit protein bL33.